The chain runs to 873 residues: DNA helicase/primase complex-associated protein (873 aa).

The interval 394 to 422 (PPLPRDDGDGENNVVEVSSSTGGAHPPSD) is disordered.

The protein belongs to the herpesviridae HEPA family. Associates with the primase and the helicase to form the helicase-primase complex. Interacts with the origin-binding protein. Interacts with the polymerase catalytic subunit.

The protein localises to the host nucleus. Component of the helicase/primase complex. Unwinds the DNA at the replication forks and generates single-stranded DNA for both leading and lagging strand synthesis. The primase synthesizes short RNA primers on the lagging strand that the polymerase presumably elongates using dNTPs. The primase-associated factor has no known catalytic activity in the complex and may serve to facilitate the formation of the replisome by directly interacting with the origin-binding protein and the polymerase. In Human cytomegalovirus (strain Merlin) (HHV-5), this protein is DNA helicase/primase complex-associated protein (UL102).